Consider the following 137-residue polypeptide: MPTINQLVRKPRQSKIKKSDSPALNKGFNSKKKKFTDLNSPQKRGVCTRVGTMTPKKPNSALRKYARVRLSNNIEINAYIPGIGHNLQEHSVVLVRGGRVKDLPGVRYHIVRGALDTSGVDGRRQGRSLYGTKKPKN.

Residues 1–55 (MPTINQLVRKPRQSKIKKSDSPALNKGFNSKKKKFTDLNSPQKRGVCTRVGTMTP) are disordered. Asp102 bears the 3-methylthioaspartic acid mark. Residues 118–137 (SGVDGRRQGRSLYGTKKPKN) form a disordered region.

The protein belongs to the universal ribosomal protein uS12 family. Part of the 30S ribosomal subunit. Contacts proteins S8 and S17. May interact with IF1 in the 30S initiation complex.

Its function is as follows. With S4 and S5 plays an important role in translational accuracy. Interacts with and stabilizes bases of the 16S rRNA that are involved in tRNA selection in the A site and with the mRNA backbone. Located at the interface of the 30S and 50S subunits, it traverses the body of the 30S subunit contacting proteins on the other side and probably holding the rRNA structure together. The combined cluster of proteins S8, S12 and S17 appears to hold together the shoulder and platform of the 30S subunit. The sequence is that of Small ribosomal subunit protein uS12 from Staphylococcus aureus (strain Mu3 / ATCC 700698).